Here is a 274-residue protein sequence, read N- to C-terminus: Formamidopyrimidine-DNA glycosylase (274 aa).

The active-site Schiff-base intermediate with DNA is Pro2. The Proton donor role is filled by Glu3. Lys58 acts as the Proton donor; for beta-elimination activity in catalysis. 3 residues coordinate DNA: His91, Arg110, and Lys152. The FPG-type zinc-finger motif lies at 237–271 (KVYGRKNLPCLVCENKIETVVIAGRHSAFCPHCQP). Arg261 functions as the Proton donor; for delta-elimination activity in the catalytic mechanism.

It belongs to the FPG family. In terms of assembly, monomer. Zn(2+) serves as cofactor.

It carries out the reaction Hydrolysis of DNA containing ring-opened 7-methylguanine residues, releasing 2,6-diamino-4-hydroxy-5-(N-methyl)formamidopyrimidine.. The enzyme catalyses 2'-deoxyribonucleotide-(2'-deoxyribose 5'-phosphate)-2'-deoxyribonucleotide-DNA = a 3'-end 2'-deoxyribonucleotide-(2,3-dehydro-2,3-deoxyribose 5'-phosphate)-DNA + a 5'-end 5'-phospho-2'-deoxyribonucleoside-DNA + H(+). Functionally, involved in base excision repair of DNA damaged by oxidation or by mutagenic agents. Acts as a DNA glycosylase that recognizes and removes damaged bases. Has a preference for oxidized purines, such as 7,8-dihydro-8-oxoguanine (8-oxoG). Has AP (apurinic/apyrimidinic) lyase activity and introduces nicks in the DNA strand. Cleaves the DNA backbone by beta-delta elimination to generate a single-strand break at the site of the removed base with both 3'- and 5'-phosphates. The sequence is that of Formamidopyrimidine-DNA glycosylase from Legionella pneumophila subsp. pneumophila (strain Philadelphia 1 / ATCC 33152 / DSM 7513).